The chain runs to 223 residues: Probable Ras-related protein Rab-4A (223 aa).

GTP is bound at residue 16-23 (GNAGTGKT). The Effector region signature appears at 38–46 (TQHTIGAEF). GTP-binding positions include 64 to 68 (DTAGQ) and 122 to 125 (NKKD). Residues Cys-221 and Cys-223 are each lipidated (S-geranylgeranyl cysteine). Position 223 is a cysteine methyl ester (Cys-223).

The protein belongs to the small GTPase superfamily. Rab family.

The protein resides in the cell membrane. Functionally, protein transport. Probably involved in vesicular traffic. The sequence is that of Probable Ras-related protein Rab-4A from Echinococcus multilocularis (Fox tapeworm).